The chain runs to 210 residues: MTLHLQAAGLACERDWRLLFEQLDFELGAGDMLQISGPNGSGKTSLLRLLAGLMQPTAGQILLGGKPLAEQRHALASALLWIGHAAGIKDLLTAEENLTWLCALHQPASREAIWAALEAVGLRGFEDVPCHTLSAGQQRRVALARLHLACPPLWILDEPFTALDKQGVAQLEAHLAAHCEQGGTVVLTTHHTLERKPSGYRELNLGQWAA.

The ABC transporter domain occupies 3-205; that stretch reads LHLQAAGLAC…KPSGYRELNL (203 aa). 37–44 provides a ligand contact to ATP; the sequence is GPNGSGKT.

It belongs to the ABC transporter superfamily. CcmA exporter (TC 3.A.1.107) family. The complex is composed of two ATP-binding proteins (CcmA) and two transmembrane proteins (CcmB).

Its subcellular location is the cell inner membrane. The catalysed reaction is heme b(in) + ATP + H2O = heme b(out) + ADP + phosphate + H(+). Functionally, part of the ABC transporter complex CcmAB involved in the biogenesis of c-type cytochromes; once thought to export heme, this seems not to be the case, but its exact role is uncertain. Responsible for energy coupling to the transport system. The sequence is that of Cytochrome c biogenesis ATP-binding export protein CcmA from Pseudomonas putida (strain ATCC 47054 / DSM 6125 / CFBP 8728 / NCIMB 11950 / KT2440).